A 2161-amino-acid polypeptide reads, in one-letter code: SH3 and multiple ankyrin repeat domains protein 1 (2161 aa).

Residues 1–53 (MTHSPATSEDEERHSASECPEGGSESDSSPDGPGRGPRGTRGQGSGAPGSLAS) are disordered. Low complexity predominate over residues 17–32 (SECPEGGSESDSSPDG). A compositionally biased stretch (gly residues) spans 33–47 (PGRGPRGTRGQGSGA). Tyr-186 bears the Phosphotyrosine mark. ANK repeat units lie at residues 212-245 (SGET…FRAR), 246-278 (DGMT…YKDR), 279-312 (RGLT…IADE), 313-345 (NGWQ…AQNA), 346-378 (SGNT…VKNN), and 379-395 (NGQT…NFEL). 2 disordered regions span residues 412–433 (ESPK…VPPA) and 455–546 (GAAS…SRGR). The span at 455 to 479 (GAASSGAPGPTSGSQGQSQPSAPTT) shows a compositional bias: low complexity. A compositionally biased stretch (gly residues) spans 527–542 (PAGGTGGSGGPGGSLG). Ser-540 bears the Phosphoserine mark. Arg-544 is modified (omega-N-methylarginine). One can recognise an SH3 domain in the interval 554-613 (VPGRSFMAVKSYQAQAEGEISLSKGEKIKVLSIGEGGFWEGQVKGRVGWFPSDCLEEVAN). The region spanning 663–757 (TVLLQKKDSE…TLMVKVVMVT (95 aa)) is the PDZ domain. Ser-671 and Ser-791 each carry phosphoserine. Residues 832–886 (TISASESPGPGGLASLGKHRPKGFFATESSFDPHHRAQPSYERPSFLPPGPGLML) are disordered. Ser-890 is modified (phosphoserine). Disordered stretches follow at residues 909–1229 (SRSL…LDFT), 1241–1289 (RREG…KSID), 1353–1720 (LGLA…GVAS), 1734–1785 (GQAF…PTSP), 1827–1860 (LPTA…QPQA), 1892–1983 (PWAR…TRHL), and 1996–2023 (RRAP…LPIL). The segment covering 920-939 (IPPPPTTSPPEPPYSTPPVP) has biased composition (pro residues). The residue at position 950 (Arg-950) is an Omega-N-methylarginine. Basic residues predominate over residues 996-1020 (AHHHPPHHHHHHAPPPQPHHHHAHP). Omega-N-methylarginine is present on residues Arg-1051, Arg-1090, and Arg-1101. Residues 1127–1144 (PPAPSPTSPASPQPPPAV) show a composition bias toward pro residues. The span at 1164 to 1181 (STSSSGRSSQGSSTEAEP) shows a compositional bias: low complexity. A compositionally biased stretch (pro residues) spans 1199 to 1220 (SPAPAMSPVPPSPSPVPTPASP). Basic and acidic residues predominate over residues 1241–1252 (RREGGWQNEARR). Asymmetric dimethylarginine is present on Arg-1253. Phosphoserine is present on Ser-1287. Residues 1359–1368 (ARERALKESS) are compositionally biased toward basic and acidic residues. The span at 1374–1391 (PQPPPRPPSPRYEAPPPT) shows a compositional bias: pro residues. Position 1423 is an omega-N-methylarginine (Arg-1423). Ser-1436 bears the Phosphoserine mark. Composition is skewed to pro residues over residues 1517 to 1532 (GVPP…PSPT) and 1583 to 1609 (PLTP…PPPA). The span at 1618 to 1636 (DSTASSLTSYDSEVATLTQ) shows a compositional bias: polar residues. Positions 1644–1670 (DPHPPGPPAPAAPAPAAPQPGPDPPPG) are enriched in pro residues. The segment covering 1678–1688 (VDSRSSSDHPL) has biased composition (basic and acidic residues). The segment covering 1692 to 1702 (SSASTLSSLSA) has biased composition (low complexity). Gly residues-rich tracts occupy residues 1703–1718 (EGGG…GAGV) and 1764–1774 (ASGGLRPGPSG). Over residues 1775–1785 (GLRDPVTPTSP) the composition is skewed to low complexity. A compositionally biased stretch (pro residues) spans 1844-1855 (PGPPPPPLPGPL). Omega-N-methylarginine is present on Arg-1895. 3 stretches are compositionally biased toward low complexity: residues 1917–1940 (SSLQ…VSSL), 1954–1980 (TGTG…STST), and 1996–2006 (RRAPSPSLLPA). Omega-N-methylarginine is present on residues Arg-2016, Arg-2036, and Arg-2074. Positions 2098–2161 (WTKFDVADWL…DRALKFFLER (64 aa)) constitute an SAM domain.

It belongs to the SHANK family. As to quaternary structure, may homomultimerize via its SAM domain. Interacts with the C-terminus of SSTR2 via the PDZ domain. Interacts with IGSF9, SHARPIN, SPTAN1, HOMER1 and DLGAP1/GKAP isoforms 1 and 2. Part of a complex with DLG4/PSD-95 and DLGAP1/GKAP. Interacts with BAIAP2. Interacts with HOMER1 and HOMER3. As to expression, expressed in brain particularly in the amygdala, hippocampus, substantia nigra and thalamus. Isoform 2 seems to be expressed ubiquitously.

It localises to the cytoplasm. It is found in the postsynaptic density. Its subcellular location is the synapse. Seems to be an adapter protein in the postsynaptic density (PSD) of excitatory synapses that interconnects receptors of the postsynaptic membrane including NMDA-type and metabotropic glutamate receptors via complexes with GKAP/PSD-95 and Homer, respectively, and the actin-based cytoskeleton. Plays a role in the structural and functional organization of the dendritic spine and synaptic junction. The sequence is that of SH3 and multiple ankyrin repeat domains protein 1 (SHANK1) from Homo sapiens (Human).